A 147-amino-acid polypeptide reads, in one-letter code: Transcriptional repressor NrdR (147 aa).

Residues Cys-3–Cys-34 fold into a zinc finger. Positions Pro-49–Ala-139 constitute an ATP-cone domain.

It belongs to the NrdR family. Zn(2+) is required as a cofactor.

Functionally, negatively regulates transcription of bacterial ribonucleotide reductase nrd genes and operons by binding to NrdR-boxes. This chain is Transcriptional repressor NrdR, found in Leptothrix cholodnii (strain ATCC 51168 / LMG 8142 / SP-6) (Leptothrix discophora (strain SP-6)).